Here is a 322-residue protein sequence, read N- to C-terminus: Putative UDP-N-acetylglucosamine--dolichyl-phosphate N-acetylglucosaminephosphotransferase (322 aa).

Helical transmembrane passes span 5–25 (AILL…VWVI), 46–66 (IPLL…FSLL), 76–96 (IPAV…DDIF), 102–122 (VRAF…VGHS), 123–143 (IISI…IIII), 160–180 (LNGL…YIGL), 186–206 (TYQA…FLIF), 222–242 (FIGA…ALAI), and 295–315 (YQVV…AVIL).

The protein belongs to the glycosyltransferase 4 family.

The protein localises to the cell membrane. It catalyses the reaction a di-trans,poly-cis-dolichyl phosphate + UDP-N-acetyl-alpha-D-glucosamine = an N-acetyl-alpha-D-glucosaminyl-diphospho-di-trans,poly-cis-dolichol + UMP. Inhibited by tunicamycin. The polypeptide is Putative UDP-N-acetylglucosamine--dolichyl-phosphate N-acetylglucosaminephosphotransferase (gnpTA) (Saccharolobus solfataricus (strain ATCC 35092 / DSM 1617 / JCM 11322 / P2) (Sulfolobus solfataricus)).